A 413-amino-acid chain; its full sequence is Multifunctional CCA protein (413 aa).

Residues Gly8 and Arg11 each coordinate ATP. Positions 8 and 11 each coordinate CTP. Mg(2+) contacts are provided by Asp21 and Asp23. 3 residues coordinate ATP: Arg91, Arg143, and Arg146. Positions 91, 143, and 146 each coordinate CTP. Positions 232–333 (TGVHVMMVVD…VRLFERSDAL (102 aa)) constitute an HD domain.

It belongs to the tRNA nucleotidyltransferase/poly(A) polymerase family. Bacterial CCA-adding enzyme type 1 subfamily. In terms of assembly, monomer. Can also form homodimers and oligomers. The cofactor is Mg(2+). Requires Ni(2+) as cofactor.

The catalysed reaction is a tRNA precursor + 2 CTP + ATP = a tRNA with a 3' CCA end + 3 diphosphate. It catalyses the reaction a tRNA with a 3' CCA end + 2 CTP + ATP = a tRNA with a 3' CCACCA end + 3 diphosphate. Its function is as follows. Catalyzes the addition and repair of the essential 3'-terminal CCA sequence in tRNAs without using a nucleic acid template. Adds these three nucleotides in the order of C, C, and A to the tRNA nucleotide-73, using CTP and ATP as substrates and producing inorganic pyrophosphate. tRNA 3'-terminal CCA addition is required both for tRNA processing and repair. Also involved in tRNA surveillance by mediating tandem CCA addition to generate a CCACCA at the 3' terminus of unstable tRNAs. While stable tRNAs receive only 3'-terminal CCA, unstable tRNAs are marked with CCACCA and rapidly degraded. The protein is Multifunctional CCA protein of Burkholderia lata (strain ATCC 17760 / DSM 23089 / LMG 22485 / NCIMB 9086 / R18194 / 383).